Reading from the N-terminus, the 502-residue chain is Hexose transporter 1 (502 aa).

Topologically, residues 1–26 (MKKSSKEISSSQSLKNGGSDHFFNTS) are cytoplasmic. Residues 27 to 47 (LMYVLAACLASFIFGYQVSVL) traverse the membrane as a helical segment. Over 48–76 (NTIKNFIVIEFGWCTGNKVECDDSTLKSS) the chain is Extracellular. C61 and C68 are disulfide-bonded. The chain crosses the membrane as a helical span at residues 77-97 (FLLASVFIGAVVGSGFSGYLV). Residues 98–102 (QHGRR) are Cytoplasmic-facing. A helical membrane pass occupies residues 103–123 (FSLLVIYNFFILVSILTSITH). Residues 124–132 (HFHTILFSR) lie on the Extracellular side of the membrane. Residues 133–153 (LLSGFGIGLITVSVPMYISEM) form a helical membrane-spanning segment. The Cytoplasmic portion of the chain corresponds to 154–163 (THKDKKGAYG). The chain crosses the membrane as a helical span at residues 164–184 (VLHQLFITFGIFVAVLLGMAM). Q167 is a binding site for alpha-D-glucose. Q167 is a beta-D-glucose binding site. Topologically, residues 185–205 (GEAPDAKSVDALGEFQKIWWR) are extracellular. A helical membrane pass occupies residues 206 to 226 (LMFFFPCLISILGIVLLTFFY). Residues 227–291 (KEETPYYLFE…RAMQIPSYRN (65 aa)) lie on the Cytoplasmic side of the membrane. Residues 292–312 (VILLGCILSGLQQFTGINVLV) traverse the membrane as a helical segment. Alpha-D-glucose-binding residues include Q303, Q304, and N309. Residue Q303 participates in beta-D-glucose binding. N309 is a binding site for beta-D-glucose. Topologically, residues 313–329 (SNSNELYKEFLSNKLIT) are extracellular. The helical transmembrane segment at 330 to 350 (TLSVIMTVVNFLMTFPAIYIV) threads the bilayer. Position 339 (N339) interacts with beta-D-glucose. The Cytoplasmic segment spans residues 351–356 (EKLGRK). Residues 357–377 (TLLLCGCAGVICAFLPTAIAN) form a helical membrane-spanning segment. At 378-390 (QIDSTSAFVKNLS) the chain is on the extracellular side. A helical membrane pass occupies residues 391-411 (IAATFVMIISFAVSYGPVLWI). Position 410 (W410) interacts with alpha-D-glucose. At 412-427 (YLHEMFPSEIKDSAAS) the chain is on the cytoplasmic side. The helical transmembrane segment at 428-448 (LASLVNWVCAIIVVFPSDIII) threads the bilayer. Residues 449 to 453 (KKSPT) are Extracellular-facing. A helical transmembrane segment spans residues 454 to 474 (ILFFIFSGMSILSFLFIFFFI). Residues 475-502 (KETKGGEIGTSPYITMEERQKHMGKSAV) are Cytoplasmic-facing.

The protein belongs to the major facilitator superfamily. Sugar transporter (TC 2.A.1.1) family. Homodimer.

Its subcellular location is the cell membrane. The enzyme catalyses D-glucose(out) = D-glucose(in). It catalyses the reaction D-fructose(out) = D-fructose(in). The catalysed reaction is D-galactose(in) = D-galactose(out). It carries out the reaction D-mannose(out) = D-mannose(in). The enzyme catalyses D-glucosamine(out) = D-glucosamine(in). It catalyses the reaction D-xylose(out) = D-xylose(in). With respect to regulation, inhibited by compound 3361 (3-O-((undec-10-en)-1-yl)-D-glucose). Functionally, sodium-independent facilitative hexose transporter. Can transport D-glucose and D-fructose. Can transport D-mannose, D-galactose, D-xylose and D-glucosamine. The sequence is that of Hexose transporter 1 from Plasmodium vivax (strain Brazil I).